The chain runs to 232 residues: UPF0502 protein mma_2112 (232 aa).

The protein belongs to the UPF0502 family.

The polypeptide is UPF0502 protein mma_2112 (Janthinobacterium sp. (strain Marseille) (Minibacterium massiliensis)).